We begin with the raw amino-acid sequence, 367 residues long: Mitogen-activated protein kinase 12 (367 aa).

In terms of domain architecture, Protein kinase spans 27 to 311 (YQDLQPVGSG…AAEALAHPYF (285 aa)). ATP contacts are provided by residues 33-41 (VGSGAYGAV) and K56. Residue D153 is the Proton acceptor of the active site. T183 is subject to Phosphothreonine; by MAP2K3 and MAP2K6. Positions 183 to 185 (TGY) match the TXY motif. Y185 is subject to Phosphotyrosine; by MAP2K3 and MAP2K6.

This sequence belongs to the protein kinase superfamily. CMGC Ser/Thr protein kinase family. MAP kinase subfamily. In terms of assembly, monomer. Interacts with the PDZ domain of the syntrophin SNTA1. Interacts with LIN7C, SCRIB, SYNJ2BP and SH3BP5. Interacts with PTPN4; this interaction induces the activation of PTPN4 phosphatase activity. Mg(2+) is required as a cofactor. In terms of processing, dually phosphorylated on Thr-183 and Tyr-185 by MAP2K3/MKK3 and MAP2K6/MKK6, which activates the enzyme. Ubiquitinated. Ubiquitination leads to degradation by the proteasome pathway. Highly expressed in skeletal muscle, lung and testes and also in the heart and thymus of both adult and neonatal rats.

It is found in the cytoplasm. Its subcellular location is the nucleus. It localises to the mitochondrion. It catalyses the reaction L-seryl-[protein] + ATP = O-phospho-L-seryl-[protein] + ADP + H(+). It carries out the reaction L-threonyl-[protein] + ATP = O-phospho-L-threonyl-[protein] + ADP + H(+). Activated by phosphorylation on threonine and tyrosine. MAP2K3/MKK3 and MAP2K6/MKK6 are both essential for the activation of MAPK12 induced by environmental stress, whereas MAP2K6/MKK6 is the major MAPK12 activator in response to TNF-alpha. Functionally, serine/threonine kinase which acts as an essential component of the MAP kinase signal transduction pathway. MAPK12 is one of the four p38 MAPKs which play an important role in the cascades of cellular responses evoked by extracellular stimuli such as pro-inflammatory cytokines or physical stress leading to direct activation of transcription factors such as ELK1 and ATF2. Accordingly, p38 MAPKs phosphorylate a broad range of proteins and it has been estimated that they may have approximately 200 to 300 substrates each. Some of the targets are downstream kinases such as MAPKAPK2, which are activated through phosphorylation and further phosphorylate additional targets. Plays a role in myoblast differentiation and also in the down-regulation of cyclin D1 in response to hypoxia in adrenal cells suggesting MAPK12 may inhibit cell proliferation while promoting differentiation. Phosphorylates DLG1. Following osmotic shock, MAPK12 in the cell nucleus increases its association with nuclear DLG1, thereby causing dissociation of DLG1-SFPQ complexes. This function is independent of its catalytic activity and could affect mRNA processing and/or gene transcription to aid cell adaptation to osmolarity changes in the environment. Regulates UV-induced checkpoint signaling and repair of UV-induced DNA damage and G2 arrest after gamma-radiation exposure. MAPK12 is involved in the regulation of SLC2A1 expression and basal glucose uptake in L6 myotubes; and negatively regulates SLC2A4 expression and contraction-mediated glucose uptake in adult skeletal muscle. C-Jun (JUN) phosphorylation is stimulated by MAPK14 and inhibited by MAPK12, leading to a distinct AP-1 regulation. MAPK12 is required for the normal kinetochore localization of PLK1, prevents chromosomal instability and supports mitotic cell viability. MAPK12-signaling is also positively regulating the expansion of transient amplifying myogenic precursor cells during muscle growth and regeneration. The polypeptide is Mitogen-activated protein kinase 12 (Mapk12) (Rattus norvegicus (Rat)).